A 490-amino-acid polypeptide reads, in one-letter code: Secretory immunoglobulin A-binding protein EsiB (490 aa).

Residues 1 to 23 (MKKSLLAVMLTGLFALVSLPALG) form the signal peptide. Sel1-like repeat units lie at residues 39–74 (AKAQ…EQGY), 77–109 (AEYV…ALKG), 111–145 (PQAQ…AEQG), 153–182 (MGDA…EQGN), 185–218 (SCNQ…TSGD), 222–254 (QLHL…EQGN), 256–290 (IAQF…EQGN), 291–327 (SDGQ…EQGD), 328–361 (ATAQ…AAKG), 364–397 (AAQF…AEQG), and 399–430 (SAAQ…DTAS). Histidine 122, glutamate 159, and aspartate 161 together coordinate Mg(2+).

As to quaternary structure, interacts with human secreted IgA (SIgA) at least via resides 244-260. Mg(2+) is required as a cofactor.

Its subcellular location is the cell surface. Its function is as follows. Upon host (human neutrophil) infection interferes with productive FCAR signaling, inhibiting secreted IgA (SIgA) effector functions and probably avoiding neutrophil activation. Inhibits the SIgA-mediated oxidative burst by neutrophils, decreases generation of ROS (reactive oxygen species) by neutrophils and reduces chemotaxis by neutrophils, all of which are SIgA effector functions used to stimulate the immune response. Does not block SIgA-binding to its receptor (FCAR) on neutrophils, but it decreases SIgA-stimulated phosphorylation of cytoplasmic proteins, including phospholipase C-gamma and MAP kinases, all actions that may be advantageous to the pathogen. The polypeptide is Secretory immunoglobulin A-binding protein EsiB (Escherichia coli O6:H1 (strain CFT073 / ATCC 700928 / UPEC)).